We begin with the raw amino-acid sequence, 118 residues long: Ribonuclease P protein component (118 aa).

It belongs to the RnpA family. Consists of a catalytic RNA component (M1 or rnpB) and a protein subunit.

It catalyses the reaction Endonucleolytic cleavage of RNA, removing 5'-extranucleotides from tRNA precursor.. In terms of biological role, RNaseP catalyzes the removal of the 5'-leader sequence from pre-tRNA to produce the mature 5'-terminus. It can also cleave other RNA substrates such as 4.5S RNA. The protein component plays an auxiliary but essential role in vivo by binding to the 5'-leader sequence and broadening the substrate specificity of the ribozyme. The chain is Ribonuclease P protein component from Rickettsia felis (strain ATCC VR-1525 / URRWXCal2) (Rickettsia azadi).